Consider the following 411-residue polypeptide: Tetra-peptide repeat homeobox protein 1 (411 aa).

Positions 3–24 form a DNA-binding region, homeobox; the sequence is SLREQQLQVWFKNRRAKLARER. Disordered stretches follow at residues 20 to 63, 88 to 246, 286 to 340, and 363 to 411; these read LARE…SGIL, IPAA…ISGP, PILS…SPDA, and LEGS…LLDL. The segment covering 27 to 55 has biased composition (low complexity); that stretch reads QQQPQRVPGQRGRGARAAPLVPAASASAP. Pro residues-rich tracts occupy residues 95 to 139 and 149 to 246; these read GPGP…PGPI and FRGP…ISGP. A compositionally biased stretch (low complexity) spans 295 to 307; sequence SPGSLPGLAPILG. Pro residues predominate over residues 319 to 335; the sequence is APIPGPGSLPAPAPLWP. Composition is skewed to polar residues over residues 366 to 376 and 388 to 402; these read SSVSTMTSQYQ and GSQP…NENH.

This sequence belongs to the paired homeobox family.

It is found in the nucleus. Functionally, transcription factor expressed after fertilization required for zygotic genome activation (ZGA), a critical event in early embryonic development during which the developmental control passes from maternally provided mRNAs to the expression of the zygotic genome after fertilization. Binds and activates expression of key ZGA marker genes, such as NANOGNB, ZSCAN4, DUXB, KLF5 and DPPA3. Binds to regulatory DNA sequences containing a 5'-TAATCC-3' sequence motif. This chain is Tetra-peptide repeat homeobox protein 1, found in Homo sapiens (Human).